The sequence spans 545 residues: Chaperonin GroEL 1 (545 aa).

Residues 29–32 (TLGP), 86–90 (DGTTT), Gly-413, 477–479 (NAA), and Asp-493 each bind ATP.

This sequence belongs to the chaperonin (HSP60) family. In terms of assembly, forms a cylinder of 14 subunits composed of two heptameric rings stacked back-to-back. Interacts with the co-chaperonin GroES.

Its subcellular location is the cytoplasm. The enzyme catalyses ATP + H2O + a folded polypeptide = ADP + phosphate + an unfolded polypeptide.. Its function is as follows. Together with its co-chaperonin GroES, plays an essential role in assisting protein folding. The GroEL-GroES system forms a nano-cage that allows encapsulation of the non-native substrate proteins and provides a physical environment optimized to promote and accelerate protein folding. This Arthrobacter sp. (strain FB24) protein is Chaperonin GroEL 1.